The chain runs to 128 residues: Regulator of ribonuclease activity B (128 aa).

The protein belongs to the RraB family. As to quaternary structure, interacts with the C-terminal region of Rne.

The protein localises to the cytoplasm. Functionally, globally modulates RNA abundance by binding to RNase E (Rne) and regulating its endonucleolytic activity. Can modulate Rne action in a substrate-dependent manner by altering the composition of the degradosome. This Idiomarina loihiensis (strain ATCC BAA-735 / DSM 15497 / L2-TR) protein is Regulator of ribonuclease activity B.